A 1481-amino-acid polypeptide reads, in one-letter code: Cystic fibrosis transmembrane conductance regulator (1481 aa).

The Cytoplasmic segment spans residues 1–77 (MQRSPLEKAS…KLINALRRCF (77 aa)). Residues 78-98 (FWRFTFYGILLYLGEVTKAVQ) form a helical membrane-spanning segment. The ABC transmembrane type-1 1 domain occupies 81 to 365 (FTFYGILLYL…WAVQTWYDSL (285 aa)). At 99–122 (PLLLGRIIASYDPDNKTERSIAIY) the chain is on the extracellular side. Residues 123-146 (LGIGLCLLFIVRTLLLHPAIFGLH) traverse the membrane as a helical segment. At 147–195 (HIGMQMRIAMFSLIYKKTLKLSSRVLDKISIGQLVSLLSNNLNKFDEGL) the chain is on the cytoplasmic side. Residues 196-216 (ALAHFVWIAPLQVALLMGLIW) traverse the membrane as a helical segment. At 217–222 (ELLQAS) the chain is on the extracellular side. The helical transmembrane segment at 223–243 (AFCGLGFLIVLALFQAGLGRM) threads the bilayer. At 244 to 298 (MMKYRDQRAGKINERLVITSEMIENIQSVKAYCWEEAMEKMIENLRQTELKLTRK) the chain is on the cytoplasmic side. The helical transmembrane segment at 299 to 319 (AAYVRYFNSSAFFFSGFFVVF) threads the bilayer. Residues 320 to 339 (LSVLPYALIKGIILRKIFTT) are Extracellular-facing. A helical membrane pass occupies residues 340–358 (ISFCIVLRMAVTRQFPWAV). Topologically, residues 359-858 (QTWYDSLGAI…YLRYITLHKS (500 aa)) are cytoplasmic. Residues Trp401, Ser434, 458–465 (GSTGAGKT), and Gln493 each bind ATP. The 224-residue stretch at 423–646 (NDDNNLFFSN…RPDFSSKLMG (224 aa)) folds into the ABC transporter 1 domain. Cys524 is lipidated: S-palmitoyl cysteine. 2 positions are modified to phosphoserine: Ser549 and Ser660. Residues 654-831 (SSERRNSILT…EEINEEDLKE (178 aa)) form a disordered R region region. The residue at position 670 (Ser670) is a Phosphoserine; by PKA. Residue Ser686 is modified to Phosphoserine. A Glycyl lysine isopeptide (Lys-Gly) (interchain with G-Cter in ubiquitin) cross-link involves residue Lys688. Residues Ser700 and Ser712 each carry the phosphoserine modification. Thr717 bears the Phosphothreonine mark. Phosphoserine is present on residues Ser737, Ser753, Ser768, Ser790, Ser795, and Ser813. The helical transmembrane segment at 859–879 (LIFVLIWCLVIFLAEVAASLV) threads the bilayer. One can recognise an ABC transmembrane type-1 2 domain in the interval 859–1155 (LIFVLIWCLV…AVNSSIDVDS (297 aa)). The Extracellular segment spans residues 880-918 (VLWLLRNTPFQDKGNSTYSRNNSYAVIITNTSSYYVFYI). N-linked (GlcNAc...) asparagine glycosylation is found at Asn894, Asn900, and Asn909. A discontinuously helical transmembrane segment spans residues 919-939 (YVGVADTLLALGFFRGLPLVH). At 940–990 (TLITVSKILHHKMLHSVLQAPMSTLNTLKAGGILNRFSKDIAILDDLLPLT) the chain is on the cytoplasmic side. Residues 991–1011 (IFDFIQLLLIVIGAIAVVSVL) traverse the membrane as a helical segment. At 1012-1013 (QP) the chain is on the extracellular side. The chain crosses the membrane as a helical span at residues 1014 to 1034 (YIFLATVPVIAAFVLLRAYFL). Residues 1035–1095 (QTSQQLKQLE…TANWFLYLST (61 aa)) lie on the Cytoplasmic side of the membrane. Residues 1096 to 1116 (LRWFQMRIEMIFVIFFIAVTF) traverse the membrane as a helical segment. The Extracellular segment spans residues 1117–1130 (ISILTTGEGEGTVG). The helical transmembrane segment at 1131–1151 (IILTLAMNIMSTLQWAVNSSI) threads the bilayer. Over 1152–1481 (DVDSLMRSVS…TEEEVQETRL (330 aa)) the chain is Cytoplasmic. An ABC transporter 2 domain is found at 1211–1444 (MTIKDLTAKY…KSLFRQAISH (234 aa)). ATP-binding positions include Tyr1220 and 1245–1252 (GRTGSGKS). The interval 1387-1481 (RALKQAFADC…TEEEVQETRL (95 aa)) is interaction with GORASP2. Residue Cys1396 is the site of S-palmitoyl cysteine attachment. Ser1445 and Ser1457 each carry phosphoserine. The tract at residues 1453–1481 (HRNSSKYKSRPQIASLKEETEEEVQETRL) is disordered. Positions 1471–1481 (ETEEEVQETRL) are enriched in acidic residues. Positions 1479–1481 (TRL) match the PDZ-binding motif.

The protein belongs to the ABC transporter superfamily. ABCC family. CFTR transporter (TC 3.A.1.202) subfamily. Monomer; does not require oligomerization for channel activity. May form oligomers in the membrane. Interacts with SLC26A3, SLC26A6 and NHERF1. Interacts with SHANK2. Interacts with MYO6. Interacts (via C-terminus) with GOPC (via PDZ domain); this promotes CFTR internalization and thereby decreases channel activity. Interacts with SLC4A7 through NHERF1. Found in a complex with MYO5B and RAB11A. Interacts with ANO1. Interacts with SLC26A8. Interacts with AHCYL1; the interaction increases CFTR activity. Interacts with CSE1L. The core-glycosylated form interacts with GORASP2 (via PDZ GRASP-type 1 domain) in respone to ER stress. Interacts with MARCHF2; the interaction leads to CFTR ubiqtuitination and degradation. Interacts with ADGRG2. In terms of processing, N-glycosylated. Phosphorylated; cAMP treatment promotes phosphorylation and activates the channel. Dephosphorylation decreases the ATPase activity (in vitro). Phosphorylation at PKA sites activates the channel. Phosphorylation at PKC sites enhances the response to phosphorylation by PKA. Phosphorylated by AMPK; this inhibits channel activity. Post-translationally, ubiquitinated, leading to its degradation in the lysosome. Deubiquitination by USP10 in early endosomes enhances its endocytic recycling to the cell membrane. Ubiquitinated by RNF185 during ER stress. Ubiquitinated by MARCHF2.

It localises to the apical cell membrane. Its subcellular location is the early endosome membrane. The protein localises to the cell membrane. It is found in the recycling endosome membrane. The protein resides in the endoplasmic reticulum membrane. It localises to the nucleus. It carries out the reaction ATP + H2O + closed Cl(-) channel = ADP + phosphate + open Cl(-) channel.. The enzyme catalyses chloride(in) = chloride(out). It catalyses the reaction hydrogencarbonate(in) = hydrogencarbonate(out). The catalysed reaction is ATP + H2O = ADP + phosphate + H(+). Functionally, epithelial ion channel that plays an important role in the regulation of epithelial ion and water transport and fluid homeostasis. Mediates the transport of chloride ions across the cell membrane. Possesses an intrinsic ATPase activity and utilizes ATP to gate its channel; the passive flow of anions through the channel is gated by cycles of ATP binding and hydrolysis by the ATP-binding domains. The ion channel is also permeable to HCO(3)(-); selectivity depends on the extracellular chloride concentration. Exerts its function also by modulating the activity of other ion channels and transporters. Contributes to the regulation of the pH and the ion content of the epithelial fluid layer. Modulates the activity of the epithelial sodium channel (ENaC) complex, in part by regulating the cell surface expression of the ENaC complex. May regulate bicarbonate secretion and salvage in epithelial cells by regulating the transporter SLC4A7. Can inhibit the chloride channel activity of ANO1. Plays a role in the chloride and bicarbonate homeostasis during sperm epididymal maturation and capacitation. This is Cystic fibrosis transmembrane conductance regulator from Callithrix jacchus (White-tufted-ear marmoset).